A 118-amino-acid polypeptide reads, in one-letter code: Large ribosomal subunit protein uL24 (118 aa).

This sequence belongs to the universal ribosomal protein uL24 family. In terms of assembly, part of the 50S ribosomal subunit.

In terms of biological role, one of two assembly initiator proteins, it binds directly to the 5'-end of the 23S rRNA, where it nucleates assembly of the 50S subunit. Its function is as follows. One of the proteins that surrounds the polypeptide exit tunnel on the outside of the subunit. In Synechococcus sp. (strain CC9605), this protein is Large ribosomal subunit protein uL24.